The sequence spans 354 residues: DNA integrity scanning protein DisA (354 aa).

The DAC domain occupies 6-144; the sequence is GMKIKDTLKI…GDIKYVLRDS (139 aa). Residues Gly-73, Leu-91, and 104-108 each bind ATP; that span reads TRHRT.

Belongs to the DisA family. In terms of assembly, homooctamer. Requires Mg(2+) as cofactor.

The enzyme catalyses 2 ATP = 3',3'-c-di-AMP + 2 diphosphate. Functionally, participates in a DNA-damage check-point that is active prior to asymmetric division when DNA is damaged. DisA forms globular foci that rapidly scan along the chromosomes during sporulation, searching for lesions. When a lesion is present, DisA pauses at the lesion site. This triggers a cellular response that culminates in a temporary block in sporulation initiation. In terms of biological role, also has diadenylate cyclase activity, catalyzing the condensation of 2 ATP molecules into cyclic di-AMP (c-di-AMP). c-di-AMP acts as a signaling molecule that couples DNA integrity with progression of sporulation. The rise in c-di-AMP level generated by DisA while scanning the chromosome, operates as a positive signal that advances sporulation; upon encountering a lesion, the DisA focus arrests at the damaged site and halts c-di-AMP synthesis. This is DNA integrity scanning protein DisA from Clostridium botulinum (strain Eklund 17B / Type B).